Reading from the N-terminus, the 428-residue chain is 3-phosphoshikimate 1-carboxyvinyltransferase (428 aa).

3 residues coordinate 3-phosphoshikimate: Lys19, Ser20, and Arg24. Position 19 (Lys19) interacts with phosphoenolpyruvate. Gly91 and Arg119 together coordinate phosphoenolpyruvate. 3-phosphoshikimate-binding residues include Ser164, Gln166, Asp312, and Lys339. Residue Gln166 coordinates phosphoenolpyruvate. Asp312 serves as the catalytic Proton acceptor. Residues Arg343 and Arg386 each coordinate phosphoenolpyruvate.

The protein belongs to the EPSP synthase family. Monomer.

The protein localises to the cytoplasm. It carries out the reaction 3-phosphoshikimate + phosphoenolpyruvate = 5-O-(1-carboxyvinyl)-3-phosphoshikimate + phosphate. It participates in metabolic intermediate biosynthesis; chorismate biosynthesis; chorismate from D-erythrose 4-phosphate and phosphoenolpyruvate: step 6/7. Its function is as follows. Catalyzes the transfer of the enolpyruvyl moiety of phosphoenolpyruvate (PEP) to the 5-hydroxyl of shikimate-3-phosphate (S3P) to produce enolpyruvyl shikimate-3-phosphate and inorganic phosphate. The chain is 3-phosphoshikimate 1-carboxyvinyltransferase from Bacillus licheniformis (strain ATCC 14580 / DSM 13 / JCM 2505 / CCUG 7422 / NBRC 12200 / NCIMB 9375 / NCTC 10341 / NRRL NRS-1264 / Gibson 46).